A 108-amino-acid chain; its full sequence is SPbeta prophage-derived uncharacterized HTH-type transcriptional regulator YonR (108 aa).

One can recognise an HTH cro/C1-type domain in the interval 6-60; the sequence is LKKCRTSKGYSQQRMADFLGITRQGYGKYEIGKAEPDLKTLTKLSNILGVSTDFL. The segment at residues 17-36 is a DNA-binding region (H-T-H motif); that stretch reads QQRMADFLGITRQGYGKYEI.

This Bacillus subtilis (strain 168) protein is SPbeta prophage-derived uncharacterized HTH-type transcriptional regulator YonR (yonR).